The following is a 253-amino-acid chain: Triosephosphate isomerase, cytosolic (253 aa).

Substrate-binding residues include N10 and K12. The Electrophile role is filled by H96. E166 serves as the catalytic Proton acceptor.

It belongs to the triosephosphate isomerase family. As to quaternary structure, homodimer.

The protein localises to the cytoplasm. The catalysed reaction is D-glyceraldehyde 3-phosphate = dihydroxyacetone phosphate. It participates in carbohydrate biosynthesis; gluconeogenesis. Its pathway is carbohydrate degradation; glycolysis; D-glyceraldehyde 3-phosphate from glycerone phosphate: step 1/1. The sequence is that of Triosephosphate isomerase, cytosolic from Zea mays (Maize).